Consider the following 310-residue polypeptide: p-hydroxybenzoic acid efflux pump subunit AaeA (310 aa).

The helical transmembrane segment at 12-32 (AITVVLVILAFIAIFNAWVYY) threads the bilayer.

It belongs to the membrane fusion protein (MFP) (TC 8.A.1) family.

Its subcellular location is the cell inner membrane. Functionally, forms an efflux pump with AaeB. The sequence is that of p-hydroxybenzoic acid efflux pump subunit AaeA from Escherichia coli O17:K52:H18 (strain UMN026 / ExPEC).